Reading from the N-terminus, the 232-residue chain is Small ribosomal subunit protein uS3 (232 aa).

The region spanning valine 39 to arginine 107 is the KH type-2 domain.

The protein belongs to the universal ribosomal protein uS3 family. As to quaternary structure, part of the 30S ribosomal subunit. Forms a tight complex with proteins S10 and S14.

Binds the lower part of the 30S subunit head. Binds mRNA in the 70S ribosome, positioning it for translation. This chain is Small ribosomal subunit protein uS3, found in Erwinia tasmaniensis (strain DSM 17950 / CFBP 7177 / CIP 109463 / NCPPB 4357 / Et1/99).